A 145-amino-acid chain; its full sequence is D-aminoacyl-tRNA deacylase (145 aa).

The Gly-cisPro motif, important for rejection of L-amino acids signature appears at 137-138 (GP).

It belongs to the DTD family. In terms of assembly, homodimer.

It is found in the cytoplasm. It carries out the reaction glycyl-tRNA(Ala) + H2O = tRNA(Ala) + glycine + H(+). It catalyses the reaction a D-aminoacyl-tRNA + H2O = a tRNA + a D-alpha-amino acid + H(+). In terms of biological role, an aminoacyl-tRNA editing enzyme that deacylates mischarged D-aminoacyl-tRNAs. Also deacylates mischarged glycyl-tRNA(Ala), protecting cells against glycine mischarging by AlaRS. Acts via tRNA-based rather than protein-based catalysis; rejects L-amino acids rather than detecting D-amino acids in the active site. By recycling D-aminoacyl-tRNA to D-amino acids and free tRNA molecules, this enzyme counteracts the toxicity associated with the formation of D-aminoacyl-tRNA entities in vivo and helps enforce protein L-homochirality. The polypeptide is D-aminoacyl-tRNA deacylase (Klebsiella pneumoniae (strain 342)).